Consider the following 283-residue polypeptide: Formamidopyrimidine-DNA glycosylase (283 aa).

Catalysis depends on P2, which acts as the Schiff-base intermediate with DNA. E3 (proton donor) is an active-site residue. Catalysis depends on K58, which acts as the Proton donor; for beta-elimination activity. DNA is bound by residues H100, R119, and K162. The FPG-type zinc-finger motif lies at 247-283 (RVYGREGQRCQTPDCAEKILRKVQSGRSSFYCPACQR). R273 (proton donor; for delta-elimination activity) is an active-site residue.

It belongs to the FPG family. In terms of assembly, monomer. It depends on Zn(2+) as a cofactor.

The enzyme catalyses Hydrolysis of DNA containing ring-opened 7-methylguanine residues, releasing 2,6-diamino-4-hydroxy-5-(N-methyl)formamidopyrimidine.. It carries out the reaction 2'-deoxyribonucleotide-(2'-deoxyribose 5'-phosphate)-2'-deoxyribonucleotide-DNA = a 3'-end 2'-deoxyribonucleotide-(2,3-dehydro-2,3-deoxyribose 5'-phosphate)-DNA + a 5'-end 5'-phospho-2'-deoxyribonucleoside-DNA + H(+). In terms of biological role, involved in base excision repair of DNA damaged by oxidation or by mutagenic agents. Acts as a DNA glycosylase that recognizes and removes damaged bases. Has a preference for oxidized purines, such as 7,8-dihydro-8-oxoguanine (8-oxoG). Has AP (apurinic/apyrimidinic) lyase activity and introduces nicks in the DNA strand. Cleaves the DNA backbone by beta-delta elimination to generate a single-strand break at the site of the removed base with both 3'- and 5'-phosphates. The sequence is that of Formamidopyrimidine-DNA glycosylase from Jannaschia sp. (strain CCS1).